Consider the following 458-residue polypeptide: Cysteine--tRNA ligase (458 aa).

Cysteine 29 is a Zn(2+) binding site. The 'HIGH' region motif lies at 31-41; that stretch reads PTVYDFLHIGN. Cysteine 211, histidine 236, and glutamate 240 together coordinate Zn(2+). A 'KMSKS' region motif is present at residues 269–273; the sequence is KMSKS. Lysine 272 serves as a coordination point for ATP.

This sequence belongs to the class-I aminoacyl-tRNA synthetase family. Monomer. Requires Zn(2+) as cofactor.

Its subcellular location is the cytoplasm. It carries out the reaction tRNA(Cys) + L-cysteine + ATP = L-cysteinyl-tRNA(Cys) + AMP + diphosphate. The chain is Cysteine--tRNA ligase from Beijerinckia indica subsp. indica (strain ATCC 9039 / DSM 1715 / NCIMB 8712).